The chain runs to 1089 residues: Platelet-derived growth factor receptor alpha (1089 aa).

Residues 1 to 23 (MGTSHPAFLVLGCLLTGLSLILC) form the signal peptide. Ig-like C2-type domains lie at 24–113 (QLSL…NELE), 117–201 (IYIY…FQTI), 202–306 (PFNV…KKVT), 319–410 (PTFS…FELL), and 414–517 (PSSI…LKLV). Topologically, residues 24-528 (QLSLPSILPN…PTLRSELTVA (505 aa)) are extracellular. Residues Asn-42, Asn-76, Asn-103, and Asn-179 are each glycosylated (N-linked (GlcNAc...) asparagine). Residues Cys-49 and Cys-100 are joined by a disulfide bond. 2 disulfide bridges follow: Cys-150-Cys-189 and Cys-235-Cys-290. N-linked (GlcNAc...) asparagine glycosylation is found at Asn-353, Asn-359, Asn-458, and Asn-468. An intrachain disulfide couples Cys-435 to Cys-501. Residues 529–549 (AAVLVLLVIVIISLIVLVVIW) traverse the membrane as a helical segment. The Cytoplasmic portion of the chain corresponds to 550–1089 (KQKPRYEIRW…SSDLVEDSFL (540 aa)). 2 positions are modified to phosphotyrosine; by autocatalysis: Tyr-572 and Tyr-574. The Protein kinase domain occupies 593–954 (LVLGRVLGSG…HLSEIVENLL (362 aa)). ATP contacts are provided by residues 599 to 607 (LGSGAFGKV) and Lys-627. Phosphotyrosine; by autocatalysis occurs at positions 720, 731, 742, 754, 762, and 768. The Proton acceptor role is filled by Asp-818. A phosphotyrosine; by autocatalysis mark is found at Tyr-849, Tyr-988, and Tyr-1018. The disordered stretch occupies residues 1018–1089 (YIIPLPDIDP…SSDLVEDSFL (72 aa)). The span at 1041–1059 (SSQTSEESAIETGSSSSTF) shows a compositional bias: polar residues. Positions 1065-1089 (ETIEDIDMMDDIGIDSSDLVEDSFL) are enriched in acidic residues.

The protein belongs to the protein kinase superfamily. Tyr protein kinase family. CSF-1/PDGF receptor subfamily. As to quaternary structure, interacts with homodimeric PDGFA, PDGFB and PDGFC, and with heterodimers formed by PDGFA and PDGFB. Monomer in the absence of bound ligand. Interaction with dimeric PDGFA, PDGFB and/or PDGFC leads to receptor dimerization, where both PDGFRA homodimers and heterodimers with PDGFRB are observed. Interacts (tyrosine phosphorylated) with SHB (via SH2 domain). Interacts (tyrosine phosphorylated) with SHF (via SH2 domain). Interacts (tyrosine phosphorylated) with SRC (via SH2 domain). Interacts (tyrosine phosphorylated) with PIK3R1. Interacts (tyrosine phosphorylated) with PLCG1 (via SH2 domain). Interacts (tyrosine phosphorylated) with CRK, GRB2 and GRB7. Interacts with CD248; this interaction promotes PDGF receptor signaling pathway. In terms of assembly, (Microbial infection) Interacts with human cytomegalovirus/HHV-5 envelope glycoprotein B/gB. Also interacts with the trimeric complex gH-gL-gO. Trimer-PDGFRA interaction has an inhibitory effect on PDGFRA signaling. N-glycosylated. Post-translationally, ubiquitinated, leading to its internalization and degradation. In terms of processing, autophosphorylated on tyrosine residues upon ligand binding. Autophosphorylation occurs in trans, i.e. one subunit of the dimeric receptor phosphorylates tyrosine residues on the other subunit. Phosphorylation at Tyr-731 and Tyr-742 is important for interaction with PIK3R1. Phosphorylation at Tyr-720 and Tyr-754 is important for interaction with PTPN11. Phosphorylation at Tyr-762 is important for interaction with CRK. Phosphorylation at Tyr-572 and Tyr-574 is important for interaction with SRC and SRC family members. Phosphorylation at Tyr-988 and Tyr-1018 is important for interaction with PLCG1. Detected in platelets (at protein level). Widely expressed. Detected in brain, fibroblasts, smooth muscle, heart, and embryo. Expressed in primary and metastatic colon tumors and in normal colon tissue.

The protein resides in the cell membrane. Its subcellular location is the cell projection. It localises to the cilium. The protein localises to the golgi apparatus. It catalyses the reaction L-tyrosyl-[protein] + ATP = O-phospho-L-tyrosyl-[protein] + ADP + H(+). Present in an inactive conformation in the absence of bound ligand. Binding of PDGFA and/or PDGFB leads to dimerization and activation by autophosphorylation on tyrosine residues. Inhibited by imatinib, nilotinib and sorafenib. Its function is as follows. Tyrosine-protein kinase that acts as a cell-surface receptor for PDGFA, PDGFB and PDGFC and plays an essential role in the regulation of embryonic development, cell proliferation, survival and chemotaxis. Depending on the context, promotes or inhibits cell proliferation and cell migration. Plays an important role in the differentiation of bone marrow-derived mesenchymal stem cells. Required for normal skeleton development and cephalic closure during embryonic development. Required for normal development of the mucosa lining the gastrointestinal tract, and for recruitment of mesenchymal cells and normal development of intestinal villi. Plays a role in cell migration and chemotaxis in wound healing. Plays a role in platelet activation, secretion of agonists from platelet granules, and in thrombin-induced platelet aggregation. Binding of its cognate ligands - homodimeric PDGFA, homodimeric PDGFB, heterodimers formed by PDGFA and PDGFB or homodimeric PDGFC -leads to the activation of several signaling cascades; the response depends on the nature of the bound ligand and is modulated by the formation of heterodimers between PDGFRA and PDGFRB. Phosphorylates PIK3R1, PLCG1, and PTPN11. Activation of PLCG1 leads to the production of the cellular signaling molecules diacylglycerol and inositol 1,4,5-trisphosphate, mobilization of cytosolic Ca(2+) and the activation of protein kinase C. Phosphorylates PIK3R1, the regulatory subunit of phosphatidylinositol 3-kinase, and thereby mediates activation of the AKT1 signaling pathway. Mediates activation of HRAS and of the MAP kinases MAPK1/ERK2 and/or MAPK3/ERK1. Promotes activation of STAT family members STAT1, STAT3 and STAT5A and/or STAT5B. Receptor signaling is down-regulated by protein phosphatases that dephosphorylate the receptor and its down-stream effectors, and by rapid internalization of the activated receptor. This chain is Platelet-derived growth factor receptor alpha (PDGFRA), found in Homo sapiens (Human).